The chain runs to 348 residues: Protein RecA (348 aa).

65-72 (GPESSGKT) contributes to the ATP binding site.

It belongs to the RecA family.

Its subcellular location is the cytoplasm. Functionally, can catalyze the hydrolysis of ATP in the presence of single-stranded DNA, the ATP-dependent uptake of single-stranded DNA by duplex DNA, and the ATP-dependent hybridization of homologous single-stranded DNAs. It interacts with LexA causing its activation and leading to its autocatalytic cleavage. This Vibrio anguillarum (Listonella anguillarum) protein is Protein RecA.